Consider the following 138-residue polypeptide: Small ribosomal subunit protein uS11c (138 aa).

A disordered region spans residues 1–21; sequence MTKSIPRIGSRRGGRIASRKN. The span at 9 to 21 shows a compositional bias: basic residues; it reads GSRRGGRIASRKN.

The protein belongs to the universal ribosomal protein uS11 family. In terms of assembly, part of the 30S ribosomal subunit.

It localises to the plastid. It is found in the chloroplast. This Calycanthus floridus var. glaucus (Eastern sweetshrub) protein is Small ribosomal subunit protein uS11c.